The sequence spans 531 residues: Cytochrome P450 monooxygenase ffsD (531 aa).

Residues 40 to 60 (VGALLGISLSVVLLLWVISVV) traverse the membrane as a helical segment. C475 contacts heme.

Belongs to the cytochrome P450 family. Requires heme as cofactor.

The protein localises to the membrane. It functions in the pathway mycotoxin biosynthesis. Its function is as follows. Cytochrome P450 monooxygenase; part of the gene cluster that mediates the biosynthesis of the cytotoxic leucine-containing cytochalasans, including aspochalasin C, aspochalasin E, TMC-169, flavichalasine F, aspergillin PZ, aspochalasin M and flavichalasine G. The first step in the pathway is catalyzed by the hybrid PKS-NRPS ffsA that utilizes 8 units of malonyl-CoA to iteratively assemble the octaketide chain before addition of L-leucine by the C-terminal NRPS modules. Because ffsA lacks a designated enoylreductase (ER) domain, the required activity is provided the enoyl reductase fssC. The methyltransferase (MT) domain of ffsA catalyzes the alpha-methylation at C10 and C14 using S-adenosyl-L-methionine as the methyl-donating cosubstrate. Reduction by the hydrolyase ffsE, followed by dehydration and intra-molecular Diels-Alder cyclization by the Diels-Alderase ffsF then yield the required isoindolone-fused macrocycle. A number of oxidative steps catalyzed by the tailoring cytochrome P450 monooxygenase ffsD, the FAD-linked oxidoreductase ffsJ and the short-chain dehydrogenase/reductase ffsI, are further required to afford the final products. The polypeptide is Cytochrome P450 monooxygenase ffsD (Aspergillus flavipes).